Reading from the N-terminus, the 971-residue chain is uncharacterized protein (971 aa).

Residues 1–24 (MQSNLLKVLGVLAIVATLVCFIFA) form the signal peptide. The segment at 127–146 (RTRPGKSNLDDSGQMIPIPR) is disordered. 6 helical membrane passes run 611 to 631 (IKAILILYVMTYGAMFLLGFA), 721 to 741 (LGLSGIIYFIITFIAICIVII), 753 to 773 (AFMATCILIGIAPLFISFLLF), 795 to 815 (VVMMAGIIVLTQLFTIYLDFV), 832 to 852 (FIGTILPIALLNVPIFCINWF), and 865 to 885 (GVNMQNIVALVIIAYGMYGYV). The tract at residues 933-971 (TGRAKSRLEQRNRTLEHAEQNSKKYKKRIGENTNEETLK) is disordered. Positions 938 to 954 (SRLEQRNRTLEHAEQNS) are enriched in basic and acidic residues.

This sequence belongs to the TrbL/VirB6 family.

Its subcellular location is the cell membrane. This is an uncharacterized protein from Rickettsia prowazekii (strain Madrid E).